Here is a 935-residue protein sequence, read N- to C-terminus: Disintegrin and metalloproteinase domain-containing protein 22 (935 aa).

An N-terminal signal peptide occupies residues methionine 1–alanine 24. Positions serine 25–arginine 227 are excised as a propeptide. Residues asparagine 167 and asparagine 210 are each glycosylated (N-linked (GlcNAc...) asparagine). Over glutamine 228–asparagine 736 the chain is Extracellular. Residues lysine 241–proline 440 form the Peptidase M12B domain. 17 disulfides stabilise this stretch: cysteine 351/cysteine 435, cysteine 394/cysteine 419, cysteine 396/cysteine 403, cysteine 449/cysteine 479, cysteine 460/cysteine 476, cysteine 462/cysteine 468, cysteine 475/cysteine 496, cysteine 487/cysteine 493, cysteine 492/cysteine 518, cysteine 505/cysteine 525, cysteine 512/cysteine 544, cysteine 537/cysteine 549, cysteine 556/cysteine 607, cysteine 571/cysteine 637, cysteine 585/cysteine 595, cysteine 602/cysteine 665, and cysteine 659/cysteine 670. One can recognise a Disintegrin domain in the interval proline 446–aspartate 533. The N-linked (GlcNAc...) asparagine glycan is linked to asparagine 521. N-linked (GlcNAc...) asparagine glycosylation is found at asparagine 609 and asparagine 636. N-linked (GlcNAc...) asparagine glycosylation is present at asparagine 677. The EGF-like domain occupies asparagine 677–serine 713. 3 cysteine pairs are disulfide-bonded: cysteine 681–cysteine 695, cysteine 689–cysteine 701, and cysteine 703–cysteine 712. A helical transmembrane segment spans residues isoleucine 737–alanine 757. Over tryptophan 758–isoleucine 935 the chain is Cytoplasmic. The segment at valine 850 to isoleucine 935 is disordered. Positions proline 859–serine 870 are enriched in polar residues. Residues serine 871–proline 882 are compositionally biased toward basic residues. The segment covering serine 891–serine 906 has biased composition (low complexity).

Post-translationally, the precursor is cleaved by a furin endopeptidase. In terms of tissue distribution, low levels in adult tissues. Not detected in developing embryos.

The protein localises to the cell membrane. Probable ligand for integrin in the brain. This is a non catalytic metalloprotease-like protein. In Xenopus laevis (African clawed frog), this protein is Disintegrin and metalloproteinase domain-containing protein 22 (adam22).